The primary structure comprises 396 residues: NADH-quinone oxidoreductase subunit D 1 (396 aa).

Belongs to the complex I 49 kDa subunit family. As to quaternary structure, NDH-1 is composed of 14 different subunits. Subunits NuoB, C, D, E, F, and G constitute the peripheral sector of the complex.

The protein localises to the cell inner membrane. It carries out the reaction a quinone + NADH + 5 H(+)(in) = a quinol + NAD(+) + 4 H(+)(out). Functionally, NDH-1 shuttles electrons from NADH, via FMN and iron-sulfur (Fe-S) centers, to quinones in the respiratory chain. The immediate electron acceptor for the enzyme in this species is believed to be ubiquinone. Couples the redox reaction to proton translocation (for every two electrons transferred, four hydrogen ions are translocated across the cytoplasmic membrane), and thus conserves the redox energy in a proton gradient. The sequence is that of NADH-quinone oxidoreductase subunit D 1 from Nitrobacter hamburgensis (strain DSM 10229 / NCIMB 13809 / X14).